The chain runs to 166 residues: Large ribosomal subunit protein uL10 (166 aa).

It belongs to the universal ribosomal protein uL10 family. In terms of assembly, part of the ribosomal stalk of the 50S ribosomal subunit. The N-terminus interacts with L11 and the large rRNA to form the base of the stalk. The C-terminus forms an elongated spine to which L12 dimers bind in a sequential fashion forming a multimeric L10(L12)X complex.

In terms of biological role, forms part of the ribosomal stalk, playing a central role in the interaction of the ribosome with GTP-bound translation factors. The sequence is that of Large ribosomal subunit protein uL10 from Oceanobacillus iheyensis (strain DSM 14371 / CIP 107618 / JCM 11309 / KCTC 3954 / HTE831).